Consider the following 918-residue polypeptide: Chaperone protein ClpC4, chloroplastic (918 aa).

Residues 266 to 515 (LMEYGTNLTK…RLRNAQCKPS (250 aa)) are i. ATP is bound by residues 311-318 (GEPGVGKT) and 653-660 (GPTGVGKS). Residues 579 to 774 (VTEDDVRHAI…LIVMTTNIGS (196 aa)) are II.

This sequence belongs to the ClpA/ClpB family. ClpC subfamily.

The protein localises to the plastid. The protein resides in the chloroplast. Molecular chaperone that may interact with a ClpP-like protease involved in degradation of denatured proteins in the chloroplast. This chain is Chaperone protein ClpC4, chloroplastic (CPLC4), found in Oryza sativa subsp. japonica (Rice).